A 329-amino-acid chain; its full sequence is uncharacterized protein (329 aa).

A Nudix hydrolase domain is found at 27 to 185 (PRRASVAVII…IQIDSSRALK (159 aa)). 3 helical membrane passes run 123–143 (VITSNWGQFPLLLLSSFVFIL), 227–247 (PFLRGITHSIFVDLFIFLSPS), and 303–323 (LTLLVGFLFRLFLVYLLFLII).

The protein resides in the membrane. This is an uncharacterized protein from Schizosaccharomyces pombe (strain 972 / ATCC 24843) (Fission yeast).